We begin with the raw amino-acid sequence, 526 residues long: DDB1- and CUL4-associated factor 17 (526 aa).

2 helical membrane-spanning segments follow: residues 200–220 (ILMR…MLEI) and 237–257 (GVLA…EYIV).

It localises to the membrane. Its subcellular location is the nucleus. It is found in the nucleolus. Its pathway is protein modification; protein ubiquitination. Functionally, may function as a substrate receptor for CUL4-DDB1 E3 ubiquitin-protein ligase complex. This Danio rerio (Zebrafish) protein is DDB1- and CUL4-associated factor 17 (dcaf17).